Reading from the N-terminus, the 330-residue chain is Mas-related G-protein coupled receptor member X2 (330 aa).

Topologically, residues 1–33 (MDPTTPAWGTESTTMNGNDQALPLLCGKETLIL) are extracellular. The helical transmembrane segment at 34-54 (VLLILFIALVGLVGNAFVLWL) threads the bilayer. The Cytoplasmic portion of the chain corresponds to 55 to 63 (LGFRMRRNA). A helical membrane pass occupies residues 64–84 (FSVYVLSLAGADFLFLCFPMI). The Extracellular segment spans residues 85–96 (NCLEYLINFFHS). Residues 97–117 (ISINFPSFFTTVMTCAYLAGL) form a helical membrane-spanning segment. Residues 118 to 144 (SMLSAISTERCLSVLWPIWYRCRRPRH) are Cytoplasmic-facing. A helical membrane pass occupies residues 145 to 165 (LSAVLCVLLWALSLLLSILEG). Residues 166–184 (KFCGLLFSDGDSGWCQTFD) lie on the Extracellular side of the membrane. The chain crosses the membrane as a helical span at residues 185 to 205 (FITAAWLMFLFVVLCGSSLAL). Over 206–228 (LVRILCGSQGLPLTRLYLTILLT) the chain is Cytoplasmic. The chain crosses the membrane as a helical span at residues 229–249 (VLIFLLCGLPFGIQWFLILWI). Topologically, residues 250–264 (WKNSDVLFCHIHPVS) are extracellular. Residues 265-285 (VVLSSFNSSANPIIYFFVGSF) form a helical membrane-spanning segment. Topologically, residues 286-330 (RKQWRLRQPVLKLALQRALQDTAEVDHSEGCFSQGTLEMSGSSLV) are cytoplasmic.

The protein belongs to the G-protein coupled receptor 1 family. Mas subfamily.

It is found in the cell membrane. Mast cell-specific receptor for basic secretagogues, i.e. cationic amphiphilic drugs, as well as endo- or exogenous peptides, consisting of a basic head group and a hydrophobic core. Recognizes and binds small molecules containing a cyclized tetrahydroisoquinoline (THIQ), such as non-steroidal neuromuscular blocking drugs (NMBDs), including tubocurarine and atracurium. In response to these compounds, mediates pseudo-allergic reactions characterized by histamine release, inflammation and airway contraction. This Rhinopithecus bieti (Black snub-nosed monkey) protein is Mas-related G-protein coupled receptor member X2 (MRGPRX2).